We begin with the raw amino-acid sequence, 297 residues long: MELNGVEIEDTFAEAFPIKISRILITAATKRWATVAAQEATGFGTSVIGCPAEAGIEKYADASETPDGRPGVYIQFCTFGFKSLEEQLLERVGQCILTAPTTAVFNGLPDAEKQFDTGRKLKYFADGTESETEVGGRKMHVIPMMEGDFLVEDTLGAVTAIAGGNFFIFGDTQMTTLTAAENAVDAIGAVDGTITPFPGGIVASGSKAGANKYKFLKATANEKFCPSIKDKVEGSEIPADVNCVYEIVINGLDFESIAKATEMGIRAAVAVPGIKKITAGNYGGSLGPHKFNLHDLF.

It belongs to the FTR family. Homotetramer.

The protein resides in the cytoplasm. It catalyses the reaction N-formylmethanofuran + 5,6,7,8-tetrahydromethanopterin + H(+) = N(5)-formyl-5,6,7,8-tetrahydromethanopterin + methanofuran. It participates in one-carbon metabolism; methanogenesis from CO(2); 5,10-methenyl-5,6,7,8-tetrahydromethanopterin from CO(2): step 2/3. Catalyzes the reversible transfer of a formyl group from formylmethanofuran (formyl-MFR) to tetrahydromethanopterin (H(4)MPT) to produce 5-formyl tetrahydromethanopterin (5-formyl-H(4)MPT) and methanofuran (MFR). In Methanococcoides burtonii (strain DSM 6242 / NBRC 107633 / OCM 468 / ACE-M), this protein is Formylmethanofuran--tetrahydromethanopterin formyltransferase.